The sequence spans 272 residues: Putative B3 domain-containing protein Os02g0455900 (272 aa).

A DNA-binding region (TF-B3) is located at residues 30–134 (GKVLMPSDVS…RFFICCRCTC (105 aa)). The segment at 189–227 (TASLGCAAAQPPQVPPTPTPRRRRRSMMVHPEPPEHTTD) is disordered.

It localises to the nucleus. The sequence is that of Putative B3 domain-containing protein Os02g0455900 from Oryza sativa subsp. japonica (Rice).